The primary structure comprises 272 residues: 3-methyl-2-oxobutanoate hydroxymethyltransferase (272 aa).

The Mg(2+) site is built by D42 and D86. 3-methyl-2-oxobutanoate-binding positions include D42–S43, D86, and K116. E118 is a Mg(2+) binding site. Residue E185 is the Proton acceptor of the active site.

The protein belongs to the PanB family. In terms of assembly, homodecamer; pentamer of dimers. Mg(2+) serves as cofactor.

The protein localises to the cytoplasm. The enzyme catalyses 3-methyl-2-oxobutanoate + (6R)-5,10-methylene-5,6,7,8-tetrahydrofolate + H2O = 2-dehydropantoate + (6S)-5,6,7,8-tetrahydrofolate. Its pathway is cofactor biosynthesis; (R)-pantothenate biosynthesis; (R)-pantoate from 3-methyl-2-oxobutanoate: step 1/2. Functionally, catalyzes the reversible reaction in which hydroxymethyl group from 5,10-methylenetetrahydrofolate is transferred onto alpha-ketoisovalerate to form ketopantoate. This chain is 3-methyl-2-oxobutanoate hydroxymethyltransferase, found in Prochlorococcus marinus (strain MIT 9303).